A 140-amino-acid polypeptide reads, in one-letter code: 3-hydroxyacyl-[acyl-carrier-protein] dehydratase FabZ (140 aa).

Histidine 46 is an active-site residue.

Belongs to the thioester dehydratase family. FabZ subfamily.

The protein localises to the cytoplasm. It catalyses the reaction a (3R)-hydroxyacyl-[ACP] = a (2E)-enoyl-[ACP] + H2O. Its function is as follows. Involved in unsaturated fatty acids biosynthesis. Catalyzes the dehydration of short chain beta-hydroxyacyl-ACPs and long chain saturated and unsaturated beta-hydroxyacyl-ACPs. This is 3-hydroxyacyl-[acyl-carrier-protein] dehydratase FabZ from Pseudothermotoga lettingae (strain ATCC BAA-301 / DSM 14385 / NBRC 107922 / TMO) (Thermotoga lettingae).